The following is a 346-amino-acid chain: Free fatty acid receptor 3 (346 aa).

The Extracellular portion of the chain corresponds to 1–19; sequence MDTGPDQSYFSGNHWFVFS. The chain crosses the membrane as a helical span at residues 20-40; sequence VYLLTFLVGLPLNLLALVVFV. The Cytoplasmic segment spans residues 41–47; the sequence is GKLQRRP. Residues 48–68 form a helical membrane-spanning segment; it reads VAVDVLLLNLTASDLLLLLFL. Residues 69–88 lie on the Extracellular side of the membrane; sequence PFRMVEAANGMHWPLPFILC. An intrachain disulfide couples Cys88 to Cys169. Residues 89 to 111 form a helical membrane-spanning segment; that stretch reads PLSGFIFFTTIYLTALFLAAVSI. The Cytoplasmic segment spans residues 112-132; it reads ERFLSVAHPLWYKTRPRLGQA. Residues 133–153 form a helical membrane-spanning segment; sequence GLVSVACWLLASAHCSVVYVI. At 154–178 the chain is on the extracellular side; the sequence is EFSGDISHSQGTNGTCYLEFRKDQL. N-linked (GlcNAc...) asparagine glycosylation occurs at Asn166. A helical transmembrane segment spans residues 179-199; that stretch reads AILLPVRLEMAVVLFVVPLII. Topologically, residues 200 to 222 are cytoplasmic; the sequence is TSYCYSRLVWILGRGGSHRRQRR. Residues 223–243 form a helical membrane-spanning segment; sequence VAGLLAATLLNFLVCFGPYNV. At 244–258 the chain is on the extracellular side; it reads SHVVGYICGESPAWR. A helical transmembrane segment spans residues 259–279; the sequence is IYVTLLSTLNSCVDPFVYYFS. Topologically, residues 280-346 are cytoplasmic; that stretch reads SSGFQADFHE…TGGQVACAES (67 aa). The segment covering 307-330 has biased composition (basic and acidic residues); that stretch reads MELKEQKGGEEQRADRPAERKTSE. The interval 307–346 is disordered; that stretch reads MELKEQKGGEEQRADRPAERKTSEHSQGCGTGGQVACAES.

It belongs to the G-protein coupled receptor 1 family. As to expression, highest level in adipose tissue, and lower expression across all tissues tested. Expressed in sympathetic ganglia.

Its subcellular location is the cell membrane. G protein-coupled receptor that is activated by a major product of dietary fiber digestion, the short chain fatty acids (SCFAs), and that plays a role in the regulation of whole-body energy homeostasis and in intestinal immunity. In omnivorous mammals, the short chain fatty acids acetate, propionate and butyrate are produced primarily by the gut microbiome that metabolizes dietary fibers. SCFAs serve as a source of energy but also act as signaling molecules. That G protein-coupled receptor is probably coupled to the pertussis toxin-sensitive, G(i/o)-alpha family of G proteins. Its activation results in the formation of inositol 1,4,5-trisphosphate, the mobilization of intracellular calcium, the phosphorylation of the MAPK3/ERK1 and MAPK1/ERK2 kinases and the inhibition of intracellular cAMP accumulation. Activated by SCFAs and by beta-hydroxybutyrate, a ketone body produced by the liver upon starvation, it inhibits N-type calcium channels and modulates the activity of sympathetic neurons through a signaling cascade involving the beta and gamma subunits of its coupled G protein, phospholipase C and MAP kinases. Thereby, it may regulate energy expenditure through the control of the sympathetic nervous system that controls for instance heart rate. Upon activation by SCFAs accumulating in the intestine, it may also signal to the brain via neural circuits which in turn would regulate intestinal gluconeogenesis. May also control the production of hormones involved in whole-body energy homeostasis. May for instance, regulate blood pressure through renin secretion. May also regulate secretion of the PYY peptide by enteroendocrine cells and control gut motility, intestinal transit rate, and the harvesting of energy from SCFAs produced by gut microbiota. May also indirectly regulate the production of LEP/Leptin, a hormone acting on the CNS to inhibit food intake, in response to the presence of short-chain fatty acids in the intestine. Finally, may also play a role in glucose homeostasis. Besides its role in energy homeostasis, may play a role in intestinal immunity. May mediate the activation of the inflammatory and immune response by SCFAs in the gut, regulating the rapid production of chemokines and cytokines by intestinal epithelial cells. Among SCFAs, the fatty acids containing less than 6 carbons, the most potent activators are probably propionate, butyrate and pentanoate while acetate is a poor activator. The sequence is that of Free fatty acid receptor 3 (FFAR3) from Homo sapiens (Human).